Reading from the N-terminus, the 497-residue chain is Glutamyl-tRNA(Gln) amidotransferase subunit A (497 aa).

Residues lysine 75 and serine 150 each act as charge relay system in the active site. Serine 174 acts as the Acyl-ester intermediate in catalysis.

The protein belongs to the amidase family. GatA subfamily. Heterotrimer of A, B and C subunits.

The catalysed reaction is L-glutamyl-tRNA(Gln) + L-glutamine + ATP + H2O = L-glutaminyl-tRNA(Gln) + L-glutamate + ADP + phosphate + H(+). Allows the formation of correctly charged Gln-tRNA(Gln) through the transamidation of misacylated Glu-tRNA(Gln) in organisms which lack glutaminyl-tRNA synthetase. The reaction takes place in the presence of glutamine and ATP through an activated gamma-phospho-Glu-tRNA(Gln). The sequence is that of Glutamyl-tRNA(Gln) amidotransferase subunit A from Paraburkholderia phymatum (strain DSM 17167 / CIP 108236 / LMG 21445 / STM815) (Burkholderia phymatum).